Consider the following 763-residue polypeptide: MSELLSVALFLASVLVYAWKAGRNTWWFAATLTVLGLFVILNITRYASDYFTGDGINDAVLYTLTNSLTGAGVGKYILPGIGIVLALVGVFGALGWILRRRRHHPHHVGYSLLALLLALGSVDASPAFRQITELVKSQTRDGDPDFAVYYKEPAKTIPNPKLNLVYIYGESLERTYFDNDAFPNLTPELGALKNEGLDFSHTMQLPGTDYTIAGMVASQCGIPLFAPFEGNASASVSSFFPQNICLGDILKNAGYQNYFVQGANLRFAGKDVFLKSHGFDHLYGAEELKTVVTDPSYRNDWGFYDDTVLDEAWKKFEALSRSGQRFSLFTLTVDTHHPDGFISRTCNRKRYDYDSKPNQSFSAVSCSQENIARFINKIKASPWFKDTVIVVSSDHLAMNNTAWKYLNKQDRNNLFFILRGDKPQQETLAVKRNTMDNGATVLDILGGDNFIGLGRSSLSGQSLSEVFLNVKEKVLAMKPDIVRLWNFPKEMKAFTIDQDKNMIAFSGSHFRLPLLLRVSDKRVEPLPESEYSAPLRFQLADFAPRDNFVWVDRCYKMAQLWAPELALSTDWCVSQGQLGGQQTVQHVDKTQWKGKTAFKDTVIDMQRYKGNVDTLKIVDNDIRYKADSFIFNVAGAPEEVKQFSGISRPETWGRWSNAQLGDEVKIEYKAPLPKKFDLVITAKAFGDNANRPIPVRVGNEEQTLVLGHDVSTTTLHFNNPTDASTLVIAPPVPVSTNEGNILGHSPRKLGIGMVEIKVVNAES.

The next 4 helical transmembrane spans lie at methionine 1–alanine 21, asparagine 24–threonine 44, isoleucine 77–isoleucine 97, and valine 108–phenylalanine 128.

This sequence belongs to the OpgB family.

Its subcellular location is the cell inner membrane. It carries out the reaction a phosphatidylglycerol + a membrane-derived-oligosaccharide D-glucose = a 1,2-diacyl-sn-glycerol + a membrane-derived-oligosaccharide 6-(glycerophospho)-D-glucose.. The protein operates within glycan metabolism; osmoregulated periplasmic glucan (OPG) biosynthesis. In terms of biological role, transfers a phosphoglycerol residue from phosphatidylglycerol to the membrane-bound nascent glucan backbones. The polypeptide is Phosphoglycerol transferase I (Salmonella arizonae (strain ATCC BAA-731 / CDC346-86 / RSK2980)).